Reading from the N-terminus, the 509-residue chain is Histone deacetylase 2 (509 aa).

The tract at residues 24 to 338 is histone deacetylase; the sequence is RRVCYFYDPE…WCYETGVALG (315 aa). H158 functions as the Proton donor/acceptor in the catalytic mechanism. Residues D193, H195, and D281 each contribute to the Zn(2+) site. The interval 394–509 is disordered; the sequence is PSVQFEERIP…NAKNEPGSSL (116 aa). Composition is skewed to basic and acidic residues over residues 398–409, 418–434, and 448–472; these read FEERIPETKLPE, DERH…DHKP, and VKRE…HKVP. Over residues 481–494 the composition is skewed to polar residues; sequence SSKQVPTADANSMA.

This sequence belongs to the histone deacetylase family. HD Type 1 subfamily. Zn(2+) is required as a cofactor. In terms of tissue distribution, expressed in roots.

Its subcellular location is the nucleus. The catalysed reaction is N(6)-acetyl-L-lysyl-[histone] + H2O = L-lysyl-[histone] + acetate. In terms of biological role, responsible for the deacetylation of lysine residues on the N-terminal part of the core histones (H2A, H2B, H3 and H4). Histone deacetylation gives a tag for epigenetic repression and plays an important role in transcriptional regulation, cell cycle progression and developmental events. Histone deacetylases act via the formation of large multiprotein complexes. The sequence is that of Histone deacetylase 2 from Oryza sativa subsp. japonica (Rice).